Consider the following 402-residue polypeptide: 3-isopropylmalate dehydratase large subunit 2 (402 aa).

Residues Cys280, Cys341, and Cys344 each coordinate [4Fe-4S] cluster.

This sequence belongs to the aconitase/IPM isomerase family. LeuC type 2 subfamily. As to quaternary structure, heterodimer of LeuC and LeuD. Requires [4Fe-4S] cluster as cofactor.

It carries out the reaction (2R,3S)-3-isopropylmalate = (2S)-2-isopropylmalate. It functions in the pathway amino-acid biosynthesis; L-leucine biosynthesis; L-leucine from 3-methyl-2-oxobutanoate: step 2/4. In terms of biological role, catalyzes the isomerization between 2-isopropylmalate and 3-isopropylmalate, via the formation of 2-isopropylmaleate. This Methanopyrus kandleri (strain AV19 / DSM 6324 / JCM 9639 / NBRC 100938) protein is 3-isopropylmalate dehydratase large subunit 2.